The chain runs to 282 residues: Bis(5'-nucleosyl)-tetraphosphatase, symmetrical (282 aa).

The protein belongs to the Ap4A hydrolase family.

The enzyme catalyses P(1),P(4)-bis(5'-adenosyl) tetraphosphate + H2O = 2 ADP + 2 H(+). Functionally, hydrolyzes diadenosine 5',5'''-P1,P4-tetraphosphate to yield ADP. The protein is Bis(5'-nucleosyl)-tetraphosphatase, symmetrical of Burkholderia mallei (strain NCTC 10247).